The sequence spans 1506 residues: DDB1- and CUL4-associated factor 1 (1506 aa).

Residues 141 to 499 are protein kinase-like; sequence QPLRTYSTGL…STLEILNLED (359 aa). 2 positions are modified to phosphoserine: serine 202 and serine 254. The tract at residues 241–275 is disordered; the sequence is RLDSSHKTSSRVNSATKPEEGGLKKNKSAKHGDRE. The Chromo domain occupies 561–592; the sequence is SYTHEQIVEMMEFLIEYGPAQLYWEPAEVFLK. Lysine 700 carries the N6-acetyllysine modification. At serine 827 the chain carries Phosphoserine. A LisH domain is found at 845-877; the sequence is PEKELLLLIRNHLISKGLGETATVLTREADLPM. Position 887 is a phosphothreonine (threonine 887). Phosphoserine is present on residues serine 894 and serine 897. Disordered regions lie at residues 916 to 946 and 977 to 999; these read ATVG…GPSY and KSDH…HLPS. The span at 924–943 shows a compositional bias: pro residues; that stretch reads SAPPAHPPPRPPQGSLPLPG. Residues serine 978 and serine 999 each carry the phosphoserine modification. WD repeat units lie at residues 1090–1129, 1132–1173, 1175–1212, 1214–1246, and 1247–1289; these read EDES…EEAS, CHNS…DMKH, FTED…KLLT, FNPD…WDVR, and SAQA…LLHT. The tract at residues 1090-1289 is WD repeat-like region; it reads EDESGFTCCA…DLRTFHLLHT (200 aa). Short sequence motifs (DWD box) lie at residues 1241–1248 and 1277–1284; these read VLWDVRSA and EIWDLRTF. Serine 1327 is subject to Phosphoserine. A disordered region spans residues 1392-1506; sequence RLAEDEDEEE…EDDIILSLNE (115 aa). 2 stretches are compositionally biased toward acidic residues: residues 1395–1482 and 1489–1500; these read EDED…EEVE and DSSDNSDLEDDI. An interaction with NF2 region spans residues 1417–1506; it reads DDDTDDLDEL…EDDIILSLNE (90 aa).

The protein belongs to the VPRBP/DCAF1 family. As to quaternary structure, component of the DCX (DDB1-CUL4-X-box) E3 ubiquitin-protein ligase complex, named CUL4A-RBX1-DDB1-DCAF1/VPRBP complex. Interacts with DDB1; the interaction is direct. Also forms a ternary complex with DDA1 and DDB1. Interacts with NF2 (via FERM domain). Component of the EDVP complex, a E3 ligase complex containing DYRK2, EDD/UBR5, DDB1 and DCAF1. Interacts with DYRK2; the interaction is direct. Interacts with RAG1; the interaction is direct. Interacts with LLGL1 and LLGL2. Interacts with histone H3. Interacts with ESR1 and LATS1; probably recruited by LATS1 to promote ESR1 ubiquitination and ubiquitin-mediated proteasomal degradation. Directly interacts with TET1, TET2 and TET3 (via C-terminus). Interacts with CEP78; promoting DCAF1 localization to centrosomes. In terms of tissue distribution, widely expressed. Expressed in oocytes and zygotes (at protein level).

It is found in the cytoplasm. The protein localises to the nucleus. The protein resides in the cytoskeleton. Its subcellular location is the microtubule organizing center. It localises to the centrosome. It catalyses the reaction L-seryl-[protein] + ATP = O-phospho-L-seryl-[protein] + ADP + H(+). It carries out the reaction L-threonyl-[protein] + ATP = O-phospho-L-threonyl-[protein] + ADP + H(+). The protein operates within protein modification; protein ubiquitination. Its function is as follows. Acts both as a substrate recognition component of E3 ubiquitin-protein ligase complexes and as an atypical serine/threonine-protein kinase, playing key roles in various processes such as cell cycle, telomerase regulation and histone modification. Probable substrate-specific adapter of a DCX (DDB1-CUL4-X-box) E3 ubiquitin-protein ligase complex, named CUL4A-RBX1-DDB1-DCAF1/VPRBP complex, which mediates ubiquitination and proteasome-dependent degradation of proteins such as NF2. Involved in the turnover of methylated proteins: recognizes and binds methylated proteins via its chromo domain, leading to ubiquitination of target proteins by the RBX1-DDB1-DCAF1/VPRBP complex. The CUL4A-RBX1-DDB1-DCAF1/VPRBP complex is also involved in B-cell development: DCAF1 is recruited by RAG1 to ubiquitinate proteins, leading to limit error-prone repair during V(D)J recombination. Also part of the EDVP complex, an E3 ligase complex that mediates ubiquitination of proteins such as TERT, leading to TERT degradation and telomerase inhibition. The EDVP complex also mediates ubiquitination and degradation of CCP110. Also acts as an atypical serine/threonine-protein kinase that specifically mediates phosphorylation of 'Thr-120' of histone H2A (H2AT120ph) in a nucleosomal context, thereby repressing transcription. H2AT120ph is present in the regulatory region of many tumor suppresor genes, down-regulates their transcription and is present at high level in a number of tumors. Involved in JNK-mediated apoptosis during cell competition process via its interaction with LLGL1 and LLGL2. By acting on TET dioxygenses, essential for oocyte maintenance at the primordial follicle stage, hence essential for female fertility. This chain is DDB1- and CUL4-associated factor 1, found in Mus musculus (Mouse).